The sequence spans 177 residues: RNA pyrophosphohydrolase (177 aa).

The Nudix hydrolase domain maps to 6–149 (GYRPNVGIVI…KRDVYRRVMK (144 aa)). The Nudix box motif lies at 38 to 59 (GGINPGESPEQAMYRELFEEVG).

This sequence belongs to the Nudix hydrolase family. RppH subfamily. A divalent metal cation serves as cofactor.

Its function is as follows. Accelerates the degradation of transcripts by removing pyrophosphate from the 5'-end of triphosphorylated RNA, leading to a more labile monophosphorylated state that can stimulate subsequent ribonuclease cleavage. This is RNA pyrophosphohydrolase from Pectobacterium atrosepticum (strain SCRI 1043 / ATCC BAA-672) (Erwinia carotovora subsp. atroseptica).